Consider the following 65-residue polypeptide: ATP synthase F(0) complex subunit 8 (65 aa).

Residues 8 to 24 traverse the membrane as a helical segment; it reads TWLTTILSMFLALFIIF. At K53 the chain carries N6-acetyllysine; alternate. Residue K53 is modified to N6-succinyllysine; alternate. An N6-acetyllysine modification is found at K56.

Belongs to the ATPase protein 8 family. In terms of assembly, component of the ATP synthase complex composed at least of ATP5F1A/subunit alpha, ATP5F1B/subunit beta, ATP5MC1/subunit c (homooctomer), MT-ATP6/subunit a, MT-ATP8/subunit 8, ATP5ME/subunit e, ATP5MF/subunit f, ATP5MG/subunit g, ATP5MK/subunit k, ATP5MJ/subunit j, ATP5F1C/subunit gamma, ATP5F1D/subunit delta, ATP5F1E/subunit epsilon, ATP5PF/subunit F6, ATP5PB/subunit b, ATP5PD/subunit d, ATP5PO/subunit OSCP. ATP synthase complex consists of a soluble F(1) head domain (subunits alpha(3) and beta(3)) - the catalytic core - and a membrane F(0) domain - the membrane proton channel (subunits c, a, 8, e, f, g, k and j). These two domains are linked by a central stalk (subunits gamma, delta, and epsilon) rotating inside the F1 region and a stationary peripheral stalk (subunits F6, b, d, and OSCP). Interacts with PRICKLE3.

The protein resides in the mitochondrion membrane. Functionally, subunit 8, of the mitochondrial membrane ATP synthase complex (F(1)F(0) ATP synthase or Complex V) that produces ATP from ADP in the presence of a proton gradient across the membrane which is generated by electron transport complexes of the respiratory chain. ATP synthase complex consist of a soluble F(1) head domain - the catalytic core - and a membrane F(1) domain - the membrane proton channel. These two domains are linked by a central stalk rotating inside the F(1) region and a stationary peripheral stalk. During catalysis, ATP synthesis in the catalytic domain of F(1) is coupled via a rotary mechanism of the central stalk subunits to proton translocation. In vivo, can only synthesize ATP although its ATP hydrolase activity can be activated artificially in vitro. Part of the complex F(0) domain. In Capra ibex ibex (Alpine ibex), this protein is ATP synthase F(0) complex subunit 8.